The primary structure comprises 283 residues: UPF0276 protein Nmul_A2550 (283 aa).

It belongs to the UPF0276 family.

This Nitrosospira multiformis (strain ATCC 25196 / NCIMB 11849 / C 71) protein is UPF0276 protein Nmul_A2550.